A 140-amino-acid chain; its full sequence is Protein ripply1 (140 aa).

The WRPW motif; required for gro2-binding signature appears at 28–31 (WRPW). Residues 71–106 (HPVRLYWPRSKSFDYLFSDGEALLRNFPVQATINFY) are ripply homology domain. A disordered region spans residues 107–126 (DESDSEDEEESCDEDDESDV).

The protein belongs to the ripply family. As to quaternary structure, interacts with gro2 via the WRPW motif. Expressed in the embryonic anterior presomitic mesoderm and in newly formed somites.

The protein resides in the nucleus. Plays a role in somitogenesis. Essential for transcriptional repression of the segmental patterning genes, thus terminating the segmentation program in the presomitic mesoderm, and also required for the maintenance of rostrocaudal polarity in somites. The protein is Protein ripply1 of Danio rerio (Zebrafish).